Consider the following 54-residue polypeptide: Ovomucoid (54 aa).

A Kazal-like domain is found at 4–54 (VDCSDYPKPACRMEYMPLCGSDNKTYGNKCNFCNAVVDSNGTLTLSHFGKC). 3 disulfides stabilise this stretch: Cys6/Cys36, Cys14/Cys33, and Cys22/Cys54. Residue Asn43 is glycosylated (N-linked (GlcNAc...) asparagine).

Its subcellular location is the secreted. The protein is Ovomucoid of Cereopsis novaehollandiae (Cape Barren goose).